Consider the following 175-residue polypeptide: Small ribosomal subunit protein uS4 (175 aa).

Residues 105-169 enclose the S4 RNA-binding domain; that stretch reads RRLQTIVYRQ…SPLADSLHPA (65 aa).

This sequence belongs to the universal ribosomal protein uS4 family. In terms of assembly, part of the 30S ribosomal subunit. Contacts protein S5. The interaction surface between S4 and S5 is involved in control of translational fidelity.

Functionally, one of the primary rRNA binding proteins, it binds directly to 16S rRNA where it nucleates assembly of the body of the 30S subunit. Its function is as follows. With S5 and S12 plays an important role in translational accuracy. The polypeptide is Small ribosomal subunit protein uS4 (Haloquadratum walsbyi (strain DSM 16790 / HBSQ001)).